Reading from the N-terminus, the 724-residue chain is Eukaryotic elongation factor 2 kinase (724 aa).

A2 carries the post-translational modification N-acetylalanine. Residues 11-35 (EGVDGGGSSGAGRHGDSDTDSDDDE) form a disordered region. A compositionally biased stretch (gly residues) spans 13-22 (VDGGGSSGAG). A phosphoserine mark is found at S18, S27, S70, and S73. At S77 the chain carries Phosphoserine; by autocatalysis and TRPM7. The tract at residues 80 to 93 (FKEAWKHAIEKAKH) is calmodulin-binding. One can recognise an Alpha-type protein kinase domain in the interval 115 to 325 (RYNAVTGEWL…ICQSMGLAPF (211 aa)). S242 is modified (phosphoserine). 295-301 (GDGNLGV) contacts ATP. Residue T347 is modified to Phosphothreonine. T352 is modified (phosphothreonine; by autocatalysis). The interval 353-476 (EEKCGSPRIR…PESDEDSLGS (124 aa)) is disordered. A Phosphoserine; by MAPK13 and CDK1 modification is found at S358. The segment covering 364–376 (LSGSRPPLLLRLS) has biased composition (low complexity). Phosphoserine occurs at positions 365 and 391. Positions 385–403 (SDVTFDSLPSSPSSATPHS) are enriched in polar residues. S397 carries the post-translational modification Phosphoserine; by AMPK. 2 stretches are compositionally biased toward basic and acidic residues: residues 421 to 435 (GPRDHDRMDNHRDSE) and 444 to 468 (SEKRSDLDDPEPREHGHSNGNRRPE). 5 positions are modified to phosphoserine: S434, S444, S469, S473, and S476. A Phosphoserine; by PKA modification is found at S499.

The protein belongs to the protein kinase superfamily. Alpha-type protein kinase family. Monomer or homodimer. Interacts with Calmodulin/CALM1; this interaction is strictly required for phosphorylation activity. In terms of processing, the N-terminus is blocked. Autophosphorylated at multiple residues, Thr-347 being the major site. Phosphorylated by AMP-activated protein kinase AMPK at Ser-397 leading to EEF2K activation and protein synthesis inhibition. Phosphorylated by TRPM7 at Ser-77 resulting in improved protein stability, higher EE2F phosphorylated and subsequently reduced rate of protein synthesis. Phosphorylation by other kinases such as CDK1 and MAPK13 at Ser-358 or RPS6KA1 and RPS6KB1 at Ser-365 instead decrease EEF2K activity and promote protein synthesis. As to expression, widely expressed, with high levels in reticulocytes and skeletal muscle.

It carries out the reaction [translation elongation factor 2] + ATP = [translation elongation factor 2]-phosphate + ADP + H(+). Its activity is regulated as follows. Undergoes calcium/calmodulin-dependent intramolecular autophosphorylation, and this results in it becoming partially calcium/calmodulin-independent. Threonine kinase that regulates protein synthesis by controlling the rate of peptide chain elongation. Upon activation by a variety of upstream kinases including AMPK or TRPM7, phosphorylates the elongation factor EEF2 at a single site, renders it unable to bind ribosomes and thus inactive. In turn, the rate of protein synthesis is reduced. The sequence is that of Eukaryotic elongation factor 2 kinase from Rattus norvegicus (Rat).